We begin with the raw amino-acid sequence, 426 residues long: Glutamyl-tRNA reductase (426 aa).

Substrate is bound by residues 49 to 52 (TCNR), Ser-109, 114 to 116 (EGQ), and Gln-120. Cys-50 functions as the Nucleophile in the catalytic mechanism. An NADP(+)-binding site is contributed by 189–194 (GAGETG).

The protein belongs to the glutamyl-tRNA reductase family. Homodimer.

It catalyses the reaction (S)-4-amino-5-oxopentanoate + tRNA(Glu) + NADP(+) = L-glutamyl-tRNA(Glu) + NADPH + H(+). It functions in the pathway porphyrin-containing compound metabolism; protoporphyrin-IX biosynthesis; 5-aminolevulinate from L-glutamyl-tRNA(Glu): step 1/2. The protein operates within porphyrin-containing compound metabolism; chlorophyll biosynthesis. Catalyzes the NADPH-dependent reduction of glutamyl-tRNA(Glu) to glutamate 1-semialdehyde (GSA). The protein is Glutamyl-tRNA reductase of Chlorobium phaeobacteroides (strain BS1).